Here is a 452-residue protein sequence, read N- to C-terminus: Gastrin/cholecystokinin type B receptor (452 aa).

At 1–55 (MELVKLNRSVQGSGPVASLCRPGGPLLNNSGTGNLSCEPPRIRGAGTRELELAIR) the chain is on the extracellular side. Asparagine 7, asparagine 28, and asparagine 34 each carry an N-linked (GlcNAc...) asparagine glycan. Residues 56 to 77 (VTLYAVIFLMSVGGNILIIVVL) traverse the membrane as a helical segment. The Cytoplasmic segment spans residues 78 to 85 (GLSRRLRT). A helical transmembrane segment spans residues 86–107 (VTNAFLLSLAVSDLLLAVACMP). Residues 108-129 (FTLLPNLMGTFIFGTVICKAVS) lie on the Extracellular side of the membrane. The cysteines at positions 125 and 203 are disulfide-linked. The chain crosses the membrane as a helical span at residues 130–148 (YLMGVSVSVSTLSLVAIAL). The Cytoplasmic segment spans residues 149-168 (ERYSAICRPLQARVWQTRSH). A helical transmembrane segment spans residues 169–187 (AARVILATWLLSGLLMVPY). The Extracellular portion of the chain corresponds to 188–217 (PVYTAVQPVGPRVLQCVHRWPSARVRQTWS). Residues 218–240 (VLLLLLLFFVPGVVMAVAYGLIS) form a helical membrane-spanning segment. Topologically, residues 241–338 (RELYLGLRFD…KLLAKKRVVR (98 aa)) are cytoplasmic. Positions 255 to 285 (SESQSRVRGQGGLPGGAAPGPVHQNGRCRPE) are disordered. The segment covering 263–272 (GQGGLPGGAA) has biased composition (gly residues). Residues 339 to 360 (MLLVIVVLFFMCWLPVYSANTW) form a helical membrane-spanning segment. At 361–378 (RAFDGPGAHRALSGAPIS) the chain is on the extracellular side. The chain crosses the membrane as a helical span at residues 379-399 (FIHLLSYASACVNPLVYCFMH). At 400–452 (RRFRQACLDTCARCCPRPPRARPRPLPDEDPPTPSIASLSRLSYTTISTLGPG) the chain is on the cytoplasmic side. Cysteine 413 carries the S-palmitoyl cysteine lipid modification.

The protein belongs to the G-protein coupled receptor 1 family.

Its subcellular location is the cell membrane. Its function is as follows. Receptor for gastrin and cholecystokinin. The CCK-B receptors occur throughout the central nervous system where they modulate anxiety, analgesia, arousal, and neuroleptic activity. This receptor mediates its action by association with G proteins that activate a phosphatidylinositol-calcium second messenger system. The sequence is that of Gastrin/cholecystokinin type B receptor (CCKBR) from Oryctolagus cuniculus (Rabbit).